The following is a 576-amino-acid chain: Sulfite reductase [NADPH] hemoprotein beta-component (576 aa).

Residues 1-12 (MDAKTQPDRSRD) are compositionally biased toward basic and acidic residues. Positions 1-26 (MDAKTQPDRSRDVSQPLDKLGPDETL) are disordered. [4Fe-4S] cluster is bound by residues Cys441, Cys447, Cys486, and Cys490. Cys490 provides a ligand contact to siroheme.

Belongs to the nitrite and sulfite reductase 4Fe-4S domain family. In terms of assembly, alpha(8)-beta(8). The alpha component is a flavoprotein, the beta component is a hemoprotein. Siroheme serves as cofactor. Requires [4Fe-4S] cluster as cofactor.

The enzyme catalyses hydrogen sulfide + 3 NADP(+) + 3 H2O = sulfite + 3 NADPH + 4 H(+). It participates in sulfur metabolism; hydrogen sulfide biosynthesis; hydrogen sulfide from sulfite (NADPH route): step 1/1. Its function is as follows. Component of the sulfite reductase complex that catalyzes the 6-electron reduction of sulfite to sulfide. This is one of several activities required for the biosynthesis of L-cysteine from sulfate. This chain is Sulfite reductase [NADPH] hemoprotein beta-component, found in Nitrobacter winogradskyi (strain ATCC 25391 / DSM 10237 / CIP 104748 / NCIMB 11846 / Nb-255).